Here is a 358-residue protein sequence, read N- to C-terminus: Aminomethyltransferase (358 aa).

The protein belongs to the GcvT family. In terms of assembly, the glycine cleavage system is composed of four proteins: P, T, L and H.

It carries out the reaction N(6)-[(R)-S(8)-aminomethyldihydrolipoyl]-L-lysyl-[protein] + (6S)-5,6,7,8-tetrahydrofolate = N(6)-[(R)-dihydrolipoyl]-L-lysyl-[protein] + (6R)-5,10-methylene-5,6,7,8-tetrahydrofolate + NH4(+). The glycine cleavage system catalyzes the degradation of glycine. This is Aminomethyltransferase from Francisella tularensis subsp. holarctica (strain FTNF002-00 / FTA).